The sequence spans 353 residues: Photosystem II D2 protein (353 aa).

Threonine 2 carries the post-translational modification N-acetylthreonine. The residue at position 2 (threonine 2) is a Phosphothreonine. Residues 41–61 form a helical membrane-spanning segment; that stretch reads CAYFALGGWFTGTTFVTSWYT. Histidine 118 is a chlorophyll a binding site. A helical membrane pass occupies residues 125–141; the sequence is GFMLRQFELARSVQLRP. Glutamine 130 and asparagine 143 together coordinate pheophytin a. The helical transmembrane segment at 153–166 threads the bilayer; that stretch reads VFVSVFLIYPLGQS. Chlorophyll a is bound at residue histidine 198. A helical transmembrane segment spans residues 208-228; it reads AALLCAIHGATVENTLFEDGD. Positions 215 and 262 each coordinate a plastoquinone. Histidine 215 contacts Fe cation. Histidine 269 provides a ligand contact to Fe cation. A helical membrane pass occupies residues 279–295; it reads GLWMSALGVVGLALNLR.

Belongs to the reaction center PufL/M/PsbA/D family. PSII is composed of 1 copy each of membrane proteins PsbA, PsbB, PsbC, PsbD, PsbE, PsbF, PsbH, PsbI, PsbJ, PsbK, PsbL, PsbM, PsbT, PsbX, PsbY, PsbZ, Psb30/Ycf12, at least 3 peripheral proteins of the oxygen-evolving complex and a large number of cofactors. It forms dimeric complexes. The D1/D2 heterodimer binds P680, chlorophylls that are the primary electron donor of PSII, and subsequent electron acceptors. It shares a non-heme iron and each subunit binds pheophytin, quinone, additional chlorophylls, carotenoids and lipids. There is also a Cl(-1) ion associated with D1 and D2, which is required for oxygen evolution. The PSII complex binds additional chlorophylls, carotenoids and specific lipids. serves as cofactor.

It is found in the plastid. It localises to the chloroplast thylakoid membrane. It carries out the reaction 2 a plastoquinone + 4 hnu + 2 H2O = 2 a plastoquinol + O2. Functionally, photosystem II (PSII) is a light-driven water:plastoquinone oxidoreductase that uses light energy to abstract electrons from H(2)O, generating O(2) and a proton gradient subsequently used for ATP formation. It consists of a core antenna complex that captures photons, and an electron transfer chain that converts photonic excitation into a charge separation. The D1/D2 (PsbA/PsbD) reaction center heterodimer binds P680, the primary electron donor of PSII as well as several subsequent electron acceptors. D2 is needed for assembly of a stable PSII complex. The polypeptide is Photosystem II D2 protein (Populus trichocarpa (Western balsam poplar)).